The primary structure comprises 74 residues: MDPISFKYIAIAFMAFGMAGAALGVASIFNALMNSIARNPSAIEDLQKAALIGAGLAEAMGLFSFILAILLMFT.

The next 2 helical transmembrane spans lie at 9–29 (IAIA…ASIF) and 51–71 (LIGA…AILL).

It belongs to the ATPase C chain family. As to quaternary structure, F-type ATPases have 2 components, F(1) - the catalytic core - and F(0) - the membrane proton channel. F(1) has five subunits: alpha(3), beta(3), gamma(1), delta(1), epsilon(1). F(0) has three main subunits: a(1), b(2) and c(10-14). The alpha and beta chains form an alternating ring which encloses part of the gamma chain. F(1) is attached to F(0) by a central stalk formed by the gamma and epsilon chains, while a peripheral stalk is formed by the delta and b chains.

Its subcellular location is the cell inner membrane. In terms of biological role, f(1)F(0) ATP synthase produces ATP from ADP in the presence of a proton or sodium gradient. F-type ATPases consist of two structural domains, F(1) containing the extramembraneous catalytic core and F(0) containing the membrane proton channel, linked together by a central stalk and a peripheral stalk. During catalysis, ATP synthesis in the catalytic domain of F(1) is coupled via a rotary mechanism of the central stalk subunits to proton translocation. Key component of the F(0) channel; it plays a direct role in translocation across the membrane. A homomeric c-ring of between 10-14 subunits forms the central stalk rotor element with the F(1) delta and epsilon subunits. In Orientia tsutsugamushi (strain Ikeda) (Rickettsia tsutsugamushi), this protein is ATP synthase subunit c.